The following is a 36-amino-acid chain: Potassium channel toxin alpha-KTx 11.3 (36 aa).

Intrachain disulfides connect Cys8-Cys27, Cys13-Cys33, and Cys17-Cys35.

Belongs to the short scorpion toxin superfamily. Potassium channel inhibitor family. Alpha-KTx 11 subfamily. As to expression, expressed by the venom gland.

It localises to the secreted. Binds and inhibits voltage-sensitive potassium channels. Inhibits the vertebrate potassium channel Kv1.1/KCNA1 with low affinity. This Parabuthus granulatus (Granulated thick-tailed scorpion) protein is Potassium channel toxin alpha-KTx 11.3.